Here is a 122-residue protein sequence, read N- to C-terminus: Large ribosomal subunit protein bL12 (122 aa).

It belongs to the bacterial ribosomal protein bL12 family. Homodimer. Part of the ribosomal stalk of the 50S ribosomal subunit. Forms a multimeric L10(L12)X complex, where L10 forms an elongated spine to which 2 to 4 L12 dimers bind in a sequential fashion. Binds GTP-bound translation factors.

Its function is as follows. Forms part of the ribosomal stalk which helps the ribosome interact with GTP-bound translation factors. Is thus essential for accurate translation. The polypeptide is Large ribosomal subunit protein bL12 (Dichelobacter nodosus (strain VCS1703A)).